The primary structure comprises 87 residues: Conotoxin Cl12.3 (87 aa).

The first 19 residues, 1 to 19 (MKLTCVLVVLLLFLPYGDL), serve as a signal peptide directing secretion. Residues 20 to 42 (ITNNYIGGAARKVTPWRRNLKTR) constitute a propeptide that is removed on maturation.

This sequence belongs to the conotoxin O1 superfamily. In terms of processing, contains 4 disulfide bonds. In terms of tissue distribution, expressed by the venom duct.

Its subcellular location is the secreted. The chain is Conotoxin Cl12.3 from Californiconus californicus (California cone).